Consider the following 87-residue polypeptide: MNLEPPKGEIRSATRVIGGPVTPRKGPPKFKQRQTRQFKSKPPKKGVQGFGDDIPGMEGLGTDITVICPWEAFNHLELHELAQYGII.

At Met1 the chain carries N-acetylmethionine. Positions 1–12 (MNLEPPKGEIRS) are enriched in basic and acidic residues. A disordered region spans residues 1 to 55 (MNLEPPKGEIRSATRVIGGPVTPRKGPPKFKQRQTRQFKSKPPKKGVQGFGDDIP). A compositionally biased stretch (basic residues) spans 26–44 (GPPKFKQRQTRQFKSKPPK).

It belongs to the rod/cone cGMP-PDE gamma subunit family. In terms of assembly, oligomer composed of two catalytic chains (alpha and beta), an inhibitory chain (gamma) and the delta chain.

The catalysed reaction is 3',5'-cyclic GMP + H2O = GMP + H(+). Its function is as follows. Participates in processes of transmission and amplification of the visual signal. cGMP-PDEs are the effector molecules in G-protein-mediated phototransduction in vertebrate rods and cones. The polypeptide is Retinal rod rhodopsin-sensitive cGMP 3',5'-cyclic phosphodiesterase subunit gamma (Pde6g) (Mus musculus (Mouse)).